Reading from the N-terminus, the 530-residue chain is Cation transporter HKT2;1 (530 aa).

Residues 1-40 (MTSIYHDFIHNKLQSFGRIGRYFVNFVVLAHRFIALHIHP) lie on the Cytoplasmic side of the membrane. The next 2 helical transmembrane spans lie at 41 to 61 (FWIQ…LLMF) and 102 to 122 (IVVI…FLGL). Residues 123–186 (MLRLNHKHNP…DLKRSKRLRW (64 aa)) lie on the Cytoplasmic side of the membrane. 2 helical membrane passes run 187–207 (FLGF…FLLV) and 260–280 (GLLL…PLFL). Residues 281–317 (RLLIWFLGKVTKLRELKLMIKNPEELQYDYLLPKLPT) lie on the Cytoplasmic side of the membrane. The next 2 membrane-spanning stretches (helical) occupy residues 318-338 (AFLA…FGAV) and 372-392 (IDCS…MYLP). The Cytoplasmic portion of the chain corresponds to 393–418 (PSTTFALSNGDEKTANKKAKRKLGLV). 2 helical membrane passes run 419 to 439 (VQNL…VAFI) and 494 to 514 (SLSG…MLYG). Over 515 to 530 (RLKAFTKGTGEYWRLW) the chain is Cytoplasmic.

It belongs to the TrkH potassium transport family. HKT (TC 2.A.38.3) subfamily. In terms of tissue distribution, expressed in epidermis and vascular tissue of endodermis in roots, and in cells surrounding the vasculature in leaves.

The protein resides in the membrane. It catalyses the reaction Na(+)(in) = Na(+)(out). In terms of biological role, seems to be involved in regulation of potassium-sodium homeostasis. Seems to act as a high-affinity sodium transporter, which mediates increased sodium uptake in roots under potassium deficiency and contributes to sodium accumulation and salt toxicity. Involved in nutritional sodium uptake and distribution in potassium-starved roots to allow plant growth. May also act as a potassium transporter. Functions as a sodium-potassium cotransporter. This chain is Cation transporter HKT2;1, found in Oryza sativa subsp. indica (Rice).